The following is a 445-amino-acid chain: Phosphoglucosamine mutase (445 aa).

Ser-102 acts as the Phosphoserine intermediate in catalysis. The Mg(2+) site is built by Ser-102, Asp-241, Asp-243, and Asp-245. Position 102 is a phosphoserine (Ser-102).

Belongs to the phosphohexose mutase family. Mg(2+) serves as cofactor. Post-translationally, activated by phosphorylation.

The catalysed reaction is alpha-D-glucosamine 1-phosphate = D-glucosamine 6-phosphate. Catalyzes the conversion of glucosamine-6-phosphate to glucosamine-1-phosphate. The chain is Phosphoglucosamine mutase from Hahella chejuensis (strain KCTC 2396).